The sequence spans 386 residues: 1-deoxy-D-xylulose 5-phosphate reductoisomerase (386 aa).

S10, G11, S12, V13, N38, and N120 together coordinate NADPH. Residue K121 coordinates 1-deoxy-D-xylulose 5-phosphate. Position 122 (E122) interacts with NADPH. D146 is a Mn(2+) binding site. 1-deoxy-D-xylulose 5-phosphate is bound by residues S147, E148, S172, and H195. Position 148 (E148) interacts with Mn(2+). G201 contacts NADPH. 1-deoxy-D-xylulose 5-phosphate contacts are provided by S208, N213, K214, and E217. E217 contributes to the Mn(2+) binding site.

The protein belongs to the DXR family. The cofactor is Mg(2+). It depends on Mn(2+) as a cofactor.

It carries out the reaction 2-C-methyl-D-erythritol 4-phosphate + NADP(+) = 1-deoxy-D-xylulose 5-phosphate + NADPH + H(+). Its pathway is isoprenoid biosynthesis; isopentenyl diphosphate biosynthesis via DXP pathway; isopentenyl diphosphate from 1-deoxy-D-xylulose 5-phosphate: step 1/6. Its function is as follows. Catalyzes the NADPH-dependent rearrangement and reduction of 1-deoxy-D-xylulose-5-phosphate (DXP) to 2-C-methyl-D-erythritol 4-phosphate (MEP). The chain is 1-deoxy-D-xylulose 5-phosphate reductoisomerase from Leptospira biflexa serovar Patoc (strain Patoc 1 / Ames).